A 474-amino-acid chain; its full sequence is Mitogen-activated protein kinase pmk-3 (474 aa).

Residues 1-13 (MASVPSSSSLPVS) show a composition bias toward low complexity. The disordered stretch occupies residues 1-90 (MASVPSSSSL…EEEEDILSKP (90 aa)). The segment covering 30-48 (KRSNNQSQPPESYEPNTWL) has biased composition (polar residues). The span at 52–69 (REQEQQKKLAAENIKKQS) shows a compositional bias: basic and acidic residues. Positions 114–419 (YDVEPNSIEY…VEEAIQHPYL (306 aa)) constitute a Protein kinase domain. ATP contacts are provided by residues 124-132 (LGGGSFGNV) and Lys-150. The Proton acceptor role is filled by Asp-252. Position 285 is a phosphothreonine (Thr-285). Positions 285–287 (TQY) match the TXY motif. Tyr-287 bears the Phosphotyrosine mark.

Belongs to the protein kinase superfamily. CMGC Ser/Thr protein kinase family. MAP kinase subfamily. Interacts with mak-2. May interact with vhp-1. May interact with uev-3. Requires Mg(2+) as cofactor. In terms of processing, dually phosphorylated on Thr-285 and Tyr-287, which activates the enzyme. As to expression, expressed throughout the intestine.

It is found in the nucleus. The protein localises to the cytoplasm. Its subcellular location is the cell projection. The protein resides in the axon. It localises to the dendrite. It is found in the cilium. The enzyme catalyses L-seryl-[protein] + ATP = O-phospho-L-seryl-[protein] + ADP + H(+). It carries out the reaction L-threonyl-[protein] + ATP = O-phospho-L-threonyl-[protein] + ADP + H(+). With respect to regulation, activated by phosphorylation on threonine and tyrosine. In terms of biological role, responds to activation by environmental stress and pro-inflammatory cytokines by phosphorylating downstream targets. Involved in axon regeneration after injury, probably downstream of dlk-1 and mkk-4 and upstream of mak-2. May phosphorylate mak-2. Plays a role in cilium length regulation, possibly by reducing rab-5 mediated endocytosis. Plays a role in the formation of muscle connections, also called muscle arm extensions, between the body wall and the motor axons in the dorsal and ventral cord. This is Mitogen-activated protein kinase pmk-3 (pmk-3) from Caenorhabditis elegans.